A 403-amino-acid chain; its full sequence is S-adenosylmethionine sensor upstream of mTORC1 (403 aa).

Positions 1–10 (MEPGPGGRGA) are enriched in gly residues. The interval 1-32 (MEPGPGGRGAARGQRPPNAAQPREQERKLEQE) is disordered. Residues 11 to 22 (ARGQRPPNAAQP) show a composition bias toward low complexity. Positions 23–32 (REQERKLEQE) are enriched in basic and acidic residues. 6 residues coordinate S-adenosyl-L-methionine: arginine 93, glycine 170, aspartate 188, aspartate 200, phenylalanine 201, and serine 242.

It belongs to the BMT2/SAMTOR family. In terms of assembly, interacts with the GATOR1 complex; interaction is disrupted when SAMTOR binds S-adenosyl-L-methionine. Interacts with the KICSTOR complex; interaction is disrupted when SAMTOR binds S-adenosyl-L-methionine.

Functionally, S-adenosyl-L-methionine-binding protein that acts as an inhibitor of mTORC1 signaling via interaction with the GATOR1 and KICSTOR complexes. Acts as a sensor of S-adenosyl-L-methionine to signal methionine sufficiency to mTORC1: in presence of methionine, binds S-adenosyl-L-methionine, leading to disrupt interaction with the GATOR1 and KICSTOR complexes and promote mTORC1 signaling. Upon methionine starvation, S-adenosyl-L-methionine levels are reduced, thereby promoting the association with GATOR1 and KICSTOR, leading to inhibit mTORC1 signaling. Probably also acts as a S-adenosyl-L-methionine-dependent methyltransferase. The polypeptide is S-adenosylmethionine sensor upstream of mTORC1 (Mus musculus (Mouse)).